A 137-amino-acid chain; its full sequence is Small ribosomal subunit protein bS16 (137 aa).

Basic and acidic residues-rich tracts occupy residues 80 to 99 and 111 to 125; these read KSPEEAQKGGMRKGEFKRLQ and VATEEPKAEEAKEAP. Residues 80-137 are disordered; that stretch reads KSPEEAQKGGMRKGEFKRLQAEQAAKAQKKAVATEEPKAEEAKEAPPAESQAAEGKEE. The segment covering 126–137 has biased composition (low complexity); sequence PAESQAAEGKEE.

It belongs to the bacterial ribosomal protein bS16 family.

This is Small ribosomal subunit protein bS16 from Coxiella burnetii (strain Dugway 5J108-111).